A 212-amino-acid chain; its full sequence is Protein GrpE (212 aa).

Residues 1 to 69 (MAEMSNNKTS…LESAKKEIES (69 aa)) are disordered. Low complexity predominate over residues 40-60 (ETTQTESMETAETETSLQTEL).

The protein belongs to the GrpE family. Homodimer.

It is found in the cytoplasm. Its function is as follows. Participates actively in the response to hyperosmotic and heat shock by preventing the aggregation of stress-denatured proteins, in association with DnaK and GrpE. It is the nucleotide exchange factor for DnaK and may function as a thermosensor. Unfolded proteins bind initially to DnaJ; upon interaction with the DnaJ-bound protein, DnaK hydrolyzes its bound ATP, resulting in the formation of a stable complex. GrpE releases ADP from DnaK; ATP binding to DnaK triggers the release of the substrate protein, thus completing the reaction cycle. Several rounds of ATP-dependent interactions between DnaJ, DnaK and GrpE are required for fully efficient folding. The chain is Protein GrpE from Leptospira interrogans serogroup Icterohaemorrhagiae serovar Lai (strain 56601).